The following is a 449-amino-acid chain: Elongation factor 1-alpha (449 aa).

The tr-type G domain occupies 5–230 (KVHMNLVVVG…DMLEPPVRPS (226 aa)). Positions 14–21 (GHVDAGKS) are G1. Residue 14–21 (GHVDAGKS) coordinates GTP. The interval 70–74 (GITID) is G2. Residues 91–94 (DAPG) form a G3 region. GTP-binding positions include 91–95 (DAPGH) and 153–156 (NKMD). The interval 153–156 (NKMD) is G4. The tract at residues 194 to 196 (SGW) is G5. E362 carries the post-translational modification 5-glutamyl glycerylphosphorylethanolamine.

Belongs to the TRAFAC class translation factor GTPase superfamily. Classic translation factor GTPase family. EF-Tu/EF-1A subfamily. Post-translationally, phosphatidylethanolamine (PE) is a direct precursor of the ethanolamine-phosphoglycerol (EPG) moiety.

The protein resides in the cytoplasm. Functionally, this protein promotes the GTP-dependent binding of aminoacyl-tRNA to the A-site of ribosomes during protein biosynthesis. In Trypanosoma brucei brucei, this protein is Elongation factor 1-alpha (TEF1).